Consider the following 278-residue polypeptide: MTVLHSVDFFPSGKAPVAIEPRLPQAAFPEHHHDFHEIVIVEHCTGIHVFNGQPYTISGGTVCFVRDHDRHLYEHTDNLCLTNVLWRSPDAFQFLAGLEQLLPQEQDGYYPSHWRVNQSALQQVRQLVGLMERAGDGMDAPAVANREILFMQLLVLLRRSSLMEGATNNDAKLNQLMAWLEDHFAEEVCWEAVAEQFSLSLRTLHRQLKQHTGLTPQRYLNRLRLIKARHLLRHSDHSVTEIAYRCGFGDSNHFSTLFRREFNWSPRDIRQGRDAIIQ.

An HTH araC/xylS-type domain is found at 174 to 272 (NQLMAWLEDH…NWSPRDIRQG (99 aa)). DNA-binding regions (H-T-H motif) lie at residues 191–212 (EAVA…KQHT) and 239–262 (VTEI…RREF).

As to quaternary structure, binds DNA as a dimer.

The protein resides in the cytoplasm. Functionally, activates expression of the rhaBAD and rhaT operons. The protein is HTH-type transcriptional activator RhaS of Salmonella dublin (strain CT_02021853).